Here is a 545-residue protein sequence, read N- to C-terminus: CTP synthase (545 aa).

Residues Met-1–Leu-266 form an amidoligase domain region. Ser-14 contributes to the CTP binding site. A UTP-binding site is contributed by Ser-14. Residues Ser-15–Ile-20 and Asp-72 contribute to the ATP site. Asp-72 and Glu-140 together coordinate Mg(2+). CTP is bound by residues Asp-147–Glu-149, Lys-187–Gln-192, and Lys-223. UTP is bound by residues Lys-187–Gln-192 and Lys-223. Residue Lys-239–Val-241 participates in ATP binding. The 252-residue stretch at Thr-291–Lys-542 folds into the Glutamine amidotransferase type-1 domain. Gly-352 contributes to the L-glutamine binding site. Cys-379 acts as the Nucleophile; for glutamine hydrolysis in catalysis. L-glutamine contacts are provided by residues Leu-380–Gln-383, Glu-403, and Arg-470. Active-site residues include His-515 and Glu-517.

It belongs to the CTP synthase family. In terms of assembly, homotetramer.

It catalyses the reaction UTP + L-glutamine + ATP + H2O = CTP + L-glutamate + ADP + phosphate + 2 H(+). It carries out the reaction L-glutamine + H2O = L-glutamate + NH4(+). The enzyme catalyses UTP + NH4(+) + ATP = CTP + ADP + phosphate + 2 H(+). It participates in pyrimidine metabolism; CTP biosynthesis via de novo pathway; CTP from UDP: step 2/2. Allosterically activated by GTP, when glutamine is the substrate; GTP has no effect on the reaction when ammonia is the substrate. The allosteric effector GTP functions by stabilizing the protein conformation that binds the tetrahedral intermediate(s) formed during glutamine hydrolysis. Inhibited by the product CTP, via allosteric rather than competitive inhibition. Catalyzes the ATP-dependent amination of UTP to CTP with either L-glutamine or ammonia as the source of nitrogen. Regulates intracellular CTP levels through interactions with the four ribonucleotide triphosphates. In Haemophilus influenzae (strain PittGG), this protein is CTP synthase.